Reading from the N-terminus, the 99-residue chain is Putative regulatory protein Kole_1849 (99 aa).

The protein belongs to the RemA family.

The chain is Putative regulatory protein Kole_1849 from Kosmotoga olearia (strain ATCC BAA-1733 / DSM 21960 / TBF 19.5.1).